Consider the following 189-residue polypeptide: UPF0340 protein SAG0103 (189 aa).

This sequence belongs to the UPF0340 family.

The polypeptide is UPF0340 protein SAG0103 (Streptococcus agalactiae serotype V (strain ATCC BAA-611 / 2603 V/R)).